Consider the following 58-residue polypeptide: Large ribosomal subunit protein uL30 (58 aa).

This sequence belongs to the universal ribosomal protein uL30 family. Part of the 50S ribosomal subunit.

This Bacteroides thetaiotaomicron (strain ATCC 29148 / DSM 2079 / JCM 5827 / CCUG 10774 / NCTC 10582 / VPI-5482 / E50) protein is Large ribosomal subunit protein uL30.